Reading from the N-terminus, the 450-residue chain is Serine/threonine-protein kinase-transforming protein Rmil (450 aa).

Composition is skewed to basic and acidic residues over residues methionine 1–valine 14 and glutamine 49–serine 73. Residues methionine 1–aspartate 80 are disordered. In terms of domain architecture, Protein kinase spans isoleucine 83 to leucine 343. ATP contacts are provided by residues isoleucine 89–valine 97 and lysine 109. Aspartate 202 serves as the catalytic Proton acceptor.

It belongs to the protein kinase superfamily. TKL Ser/Thr protein kinase family. RAF subfamily.

The catalysed reaction is L-seryl-[protein] + ATP = O-phospho-L-seryl-[protein] + ADP + H(+). It catalyses the reaction L-threonyl-[protein] + ATP = O-phospho-L-threonyl-[protein] + ADP + H(+). The chain is Serine/threonine-protein kinase-transforming protein Rmil (V-RMIL) from Avian rous-associated virus type 1.